The following is a 227-amino-acid chain: UPF0173 metal-dependent hydrolase BCAH820_4729 (227 aa).

This sequence belongs to the UPF0173 family.

This Bacillus cereus (strain AH820) protein is UPF0173 metal-dependent hydrolase BCAH820_4729.